Reading from the N-terminus, the 565-residue chain is NAD-dependent malic enzyme (565 aa).

Catalysis depends on Tyr104, which acts as the Proton donor. Residue Arg157 participates in NAD(+) binding. The active-site Proton acceptor is the Lys175. Residues Glu246, Asp247, and Asp270 each coordinate a divalent metal cation. NAD(+) is bound by residues Asp270 and Asn418.

The protein belongs to the malic enzymes family. In terms of assembly, homotetramer. It depends on Mg(2+) as a cofactor. Requires Mn(2+) as cofactor.

The enzyme catalyses (S)-malate + NAD(+) = pyruvate + CO2 + NADH. The catalysed reaction is oxaloacetate + H(+) = pyruvate + CO2. This is NAD-dependent malic enzyme from Yersinia pseudotuberculosis serotype O:1b (strain IP 31758).